Consider the following 295-residue polypeptide: 4-diphosphocytidyl-2-C-methyl-D-erythritol kinase (295 aa).

The active site involves Lys10. Pro97–Ser107 contacts ATP. Residue Asp139 is part of the active site.

This sequence belongs to the GHMP kinase family. IspE subfamily. Homodimer.

The enzyme catalyses 4-CDP-2-C-methyl-D-erythritol + ATP = 4-CDP-2-C-methyl-D-erythritol 2-phosphate + ADP + H(+). Its pathway is isoprenoid biosynthesis; isopentenyl diphosphate biosynthesis via DXP pathway; isopentenyl diphosphate from 1-deoxy-D-xylulose 5-phosphate: step 3/6. Functionally, catalyzes the phosphorylation of the position 2 hydroxy group of 4-diphosphocytidyl-2C-methyl-D-erythritol. In Blochmanniella pennsylvanica (strain BPEN), this protein is 4-diphosphocytidyl-2-C-methyl-D-erythritol kinase.